Reading from the N-terminus, the 233-residue chain is Large ribosomal subunit protein uL1 (233 aa).

The protein belongs to the universal ribosomal protein uL1 family. In terms of assembly, part of the 50S ribosomal subunit.

Binds directly to 23S rRNA. The L1 stalk is quite mobile in the ribosome, and is involved in E site tRNA release. Functionally, protein L1 is also a translational repressor protein, it controls the translation of the L11 operon by binding to its mRNA. In Photorhabdus laumondii subsp. laumondii (strain DSM 15139 / CIP 105565 / TT01) (Photorhabdus luminescens subsp. laumondii), this protein is Large ribosomal subunit protein uL1.